We begin with the raw amino-acid sequence, 249 residues long: 23S rRNA (guanosine-2'-O-)-methyltransferase RlmB (249 aa).

Residues Gly-200, Ile-220, and Leu-229 each coordinate S-adenosyl-L-methionine.

This sequence belongs to the class IV-like SAM-binding methyltransferase superfamily. RNA methyltransferase TrmH family. RlmB subfamily.

Its subcellular location is the cytoplasm. It catalyses the reaction guanosine(2251) in 23S rRNA + S-adenosyl-L-methionine = 2'-O-methylguanosine(2251) in 23S rRNA + S-adenosyl-L-homocysteine + H(+). Functionally, specifically methylates the ribose of guanosine 2251 in 23S rRNA. In Xylella fastidiosa (strain 9a5c), this protein is 23S rRNA (guanosine-2'-O-)-methyltransferase RlmB.